The primary structure comprises 292 residues: NAD-dependent protein deacetylase sir-2.4 (292 aa).

A Deacetylase sirtuin-type domain is found at isoleucine 31–serine 292. Residues glycine 56–tryptophan 75 and glutamine 116–aspartate 119 each bind NAD(+). The active-site Proton acceptor is the histidine 136. The Zn(2+) site is built by cysteine 144, cysteine 147, cysteine 163, and cysteine 169. Residues glycine 216–serine 218, asparagine 242–glutamine 244, and valine 260 each bind NAD(+).

Belongs to the sirtuin family. Class IV subfamily. Requires Zn(2+) as cofactor.

It catalyses the reaction N(6)-acetyl-L-lysyl-[protein] + NAD(+) + H2O = 2''-O-acetyl-ADP-D-ribose + nicotinamide + L-lysyl-[protein]. NAD-dependent protein deacetylase. The protein is NAD-dependent protein deacetylase sir-2.4 (sir-2.4) of Caenorhabditis elegans.